A 338-amino-acid chain; its full sequence is Tetraacyldisaccharide 4'-kinase (338 aa).

Residue 63-70 (TVGGSGKT) participates in ATP binding.

This sequence belongs to the LpxK family.

The enzyme catalyses a lipid A disaccharide + ATP = a lipid IVA + ADP + H(+). It functions in the pathway glycolipid biosynthesis; lipid IV(A) biosynthesis; lipid IV(A) from (3R)-3-hydroxytetradecanoyl-[acyl-carrier-protein] and UDP-N-acetyl-alpha-D-glucosamine: step 6/6. Its function is as follows. Transfers the gamma-phosphate of ATP to the 4'-position of a tetraacyldisaccharide 1-phosphate intermediate (termed DS-1-P) to form tetraacyldisaccharide 1,4'-bis-phosphate (lipid IVA). This chain is Tetraacyldisaccharide 4'-kinase, found in Shewanella loihica (strain ATCC BAA-1088 / PV-4).